The primary structure comprises 266 residues: Gasdermin bGSDM (266 aa).

Residue Cys3 is the site of S-palmitoyl cysteine attachment. Beta stranded transmembrane passes span 69–85 (ISGQ…GLSI), 97–115 (KLGL…FEFQ), 163–180 (KFTI…ELTI), and 189–205 (GNVK…KICY).

It belongs to the bacterial gasdermin family. As to quaternary structure, monomer. In terms of assembly, forms large, homooligomeric ring-shaped pores when inserted in membranes. Palmitoylation helps stabilize the inactive state; may self palmitoylate. Palmitoylation plays a significant role in pore formation.

It is found in the cytoplasm. Its subcellular location is the cell inner membrane. With respect to regulation, the full-length protein before cleavage is inactive: intramolecular interactions between the N-terminal domain and the C-terminal region as well as the lipid modification, mediate autoinhibition. The pyroptosis-like-inducing activity is carried by the released N-terminal domain (Gasdermin bGSDM, N-terminus). Precursor of a pore-forming protein involved in defense against bacteriophages. Expression of bGSDM and the neighboring protease gene (Ga0182885_104520) is toxic in E.coli. Cleavage of this precursor by its dedicated protease releases the active moiety (gasdermin bGSDM, N-terminus) which inserts into membranes, forming pores and triggering cell death. In terms of biological role, pore-forming protein that causes membrane permeabilization via a pyroptosis-like activity. Makes ring-like pores when released. This Desulfuromonadales bacterium protein is Gasdermin bGSDM.